A 280-amino-acid chain; its full sequence is uncharacterized protein (280 aa).

Composition is skewed to basic and acidic residues over residues 110 to 122, 167 to 177, 223 to 261, and 269 to 280; these read EKQA…ERLQ, ATGEERAECGR, ARQH…RPQQ, and DVDRSKSCLEAE. Disordered stretches follow at residues 110–137, 151–177, and 219–280; these read EKQA…KTEH, HRGE…ECGR, and TIID…LEAE.

This is an uncharacterized protein from Agrobacterium vitis (Rhizobium vitis).